The sequence spans 601 residues: Sulfite reductase [NADPH] flavoprotein alpha-component (601 aa).

A Flavodoxin-like domain is found at 64-202 (ITLISASQTG…AAQEWRARVV (139 aa)). FMN contacts are provided by residues 70–75 (SQTGNA), 117–120 (STQG), and 153–162 (LGDTSYEFFC). One can recognise an FAD-binding FR-type domain in the interval 236-450 (EAPLSASLAV…IEHNDNFRLP (215 aa)). FAD-binding positions include T324, A358, 388-391 (RLYS), 406-408 (TVG), Y412, and 421-424 (GGAS). Residues 521–522 (SR), 527–531 (KIYVQ), and D563 each bind NADP(+). FAD is bound at residue Y601.

This sequence belongs to the NADPH-dependent sulphite reductase flavoprotein subunit CysJ family. It in the N-terminal section; belongs to the flavodoxin family. In the C-terminal section; belongs to the flavoprotein pyridine nucleotide cytochrome reductase family. Alpha(8)-beta(8). The alpha component is a flavoprotein, the beta component is a hemoprotein. FAD is required as a cofactor. Requires FMN as cofactor.

It carries out the reaction hydrogen sulfide + 3 NADP(+) + 3 H2O = sulfite + 3 NADPH + 4 H(+). The protein operates within sulfur metabolism; hydrogen sulfide biosynthesis; hydrogen sulfide from sulfite (NADPH route): step 1/1. Its function is as follows. Component of the sulfite reductase complex that catalyzes the 6-electron reduction of sulfite to sulfide. This is one of several activities required for the biosynthesis of L-cysteine from sulfate. The flavoprotein component catalyzes the electron flow from NADPH -&gt; FAD -&gt; FMN to the hemoprotein component. The protein is Sulfite reductase [NADPH] flavoprotein alpha-component of Citrobacter koseri (strain ATCC BAA-895 / CDC 4225-83 / SGSC4696).